A 311-amino-acid chain; its full sequence is tRNA dimethylallyltransferase (311 aa).

An ATP-binding site is contributed by 10-17; sequence GPTASGKT. 12-17 provides a ligand contact to substrate; the sequence is TASGKT. Interaction with substrate tRNA stretches follow at residues 35–38, 159–163, and 240–245; these read DSAL, QRINR, and RCVGYR.

This sequence belongs to the IPP transferase family. As to quaternary structure, monomer. It depends on Mg(2+) as a cofactor.

It catalyses the reaction adenosine(37) in tRNA + dimethylallyl diphosphate = N(6)-dimethylallyladenosine(37) in tRNA + diphosphate. Catalyzes the transfer of a dimethylallyl group onto the adenine at position 37 in tRNAs that read codons beginning with uridine, leading to the formation of N6-(dimethylallyl)adenosine (i(6)A). This chain is tRNA dimethylallyltransferase, found in Haemophilus influenzae (strain 86-028NP).